A 162-amino-acid polypeptide reads, in one-letter code: Protein NrdI (162 aa).

Belongs to the NrdI family.

Its function is as follows. Probably involved in ribonucleotide reductase function. This Streptococcus pyogenes serotype M2 (strain MGAS10270) protein is Protein NrdI.